Reading from the N-terminus, the 681-residue chain is Auxin response factor 8 (681 aa).

Positions 120–222 (FAKTLTQSDA…DLHVGIRRAK (103 aa)) form a DNA-binding region, TF-B3. Disordered stretches follow at residues 474–518 (LRRP…AKPP) and 534–577 (SLSG…TSSE). 2 stretches are compositionally biased toward polar residues: residues 534-555 (SLSG…NTEK) and 564-577 (GVIQ…TSSE). One can recognise a PB1 domain in the interval 595–675 (PGQCKVFIES…RRLTILTDAG (81 aa)).

It belongs to the ARF family. As to quaternary structure, homodimers and heterodimers. Expressed in roots, culms, leaves and young panicles.

It localises to the nucleus. Functionally, auxin response factors (ARFs) are transcriptional factors that bind specifically to the DNA sequence 5'-TGTCTC-3' found in the auxin-responsive promoter elements (AuxREs). The sequence is that of Auxin response factor 8 (ARF8) from Oryza sativa subsp. japonica (Rice).